The chain runs to 270 residues: MEGPLTIPVLDKGFVRLVDQMGDDRAIVQAARVSYGEGTKTVREDAALIDYLMRHRHTSPFEMVVFKFHVKAPIFVARQWFRHRTASVNEISGRYSILKEEFYEPEAFRKQAKRNKQASEGALLDEEALALLRKVQQEAYGAYRALLEKGVAREMARMVLPLNLYTEFYWKQDLHNLFHFLKLRLAPEAQWEIRQYARAIAEIVKERVPLAWAAFEEHLLEGAFLSRTELRALRGLLTPEVYEKALSSLGLGGSRLKEALEKVFGPGEAL.

The ThyX domain occupies 13 to 218 (GFVRLVDQMG…PLAWAAFEEH (206 aa)). FAD-binding positions include serine 59, 82–84 (RHR), and glutamate 90. Residues 79-82 (QWFR), 90-94 (EISGR), and arginine 157 each bind dUMP. The ThyX motif signature appears at 82 to 92 (RHRTASVNEIS). FAD is bound by residues 173 to 175 (DLH) and histidine 179. Residue arginine 184 participates in dUMP binding. Arginine 184 (involved in ionization of N3 of dUMP, leading to its activation) is an active-site residue.

This sequence belongs to the thymidylate synthase ThyX family. In terms of assembly, homotetramer. FAD is required as a cofactor.

The enzyme catalyses dUMP + (6R)-5,10-methylene-5,6,7,8-tetrahydrofolate + NADPH + H(+) = dTMP + (6S)-5,6,7,8-tetrahydrofolate + NADP(+). It participates in pyrimidine metabolism; dTTP biosynthesis. Catalyzes the reductive methylation of 2'-deoxyuridine-5'-monophosphate (dUMP) to 2'-deoxythymidine-5'-monophosphate (dTMP) while utilizing 5,10-methylenetetrahydrofolate (mTHF) as the methyl donor, and NADPH and FADH(2) as the reductant. This chain is Flavin-dependent thymidylate synthase, found in Thermus thermophilus (strain ATCC 27634 / DSM 579 / HB8).